Reading from the N-terminus, the 309-residue chain is Sulfur oxygenase/reductase (309 aa).

C31 carries the post-translational modification Cysteine persulfide. Fe cation-binding residues include H86, H90, and E114.

As to quaternary structure, homoicosatetramer. The resulting structure is a hollow sphere where catalysis takes place in the inside cavity. Requires Fe cation as cofactor.

It localises to the cytoplasm. The catalysed reaction is 4 sulfur + O2 + 4 H2O = 2 hydrogen sulfide + 2 sulfite + 6 H(+). Its activity is regulated as follows. Inhibited by zinc. Functionally, catalyzes the simultaneous oxidation and reduction of elemental sulfur in the presence of oxygen, with sulfite and hydrogen sulfide as products. The polypeptide is Sulfur oxygenase/reductase (sor) (Acidianus ambivalens (Desulfurolobus ambivalens)).